The following is a 276-amino-acid chain: MAIKKYKPTTNGRRNMTSSDFAEITTSTPEKSLLQPLKNNAGRNNNGRITVRHQGGGHKRQYRVIDFKRNKDNVAAVVKTIEYDPNRSANIALVHYEDGVKAYILAPKGLEVGMRLVSGPEADIKVGNALPLENIPVGTVIHNIEMKPGKGGQLIRSAGTSAQVLGKEGKYVLIRLNSGEVRMILATCRATIGSVGNEQHELINIGKAGRSRWMRKRPTVRGSVMNPNDHPHGGGEGKTPIGRKAPVSPWGQPAIGYKTRNKKAKSDKLIVRRRTK.

2 disordered regions span residues 34–55 (LQPL…RHQG) and 221–276 (RGSV…RRTK). The span at 37 to 48 (LKNNAGRNNNGR) shows a compositional bias: polar residues.

It belongs to the universal ribosomal protein uL2 family. In terms of assembly, part of the 50S ribosomal subunit. Forms a bridge to the 30S subunit in the 70S ribosome.

Functionally, one of the primary rRNA binding proteins. Required for association of the 30S and 50S subunits to form the 70S ribosome, for tRNA binding and peptide bond formation. It has been suggested to have peptidyltransferase activity; this is somewhat controversial. Makes several contacts with the 16S rRNA in the 70S ribosome. This Enterococcus faecalis (strain ATCC 700802 / V583) protein is Large ribosomal subunit protein uL2.